The primary structure comprises 109 residues: Large ribosomal subunit protein uL22 (109 aa).

The protein belongs to the universal ribosomal protein uL22 family. In terms of assembly, part of the 50S ribosomal subunit.

This protein binds specifically to 23S rRNA; its binding is stimulated by other ribosomal proteins, e.g. L4, L17, and L20. It is important during the early stages of 50S assembly. It makes multiple contacts with different domains of the 23S rRNA in the assembled 50S subunit and ribosome. Functionally, the globular domain of the protein is located near the polypeptide exit tunnel on the outside of the subunit, while an extended beta-hairpin is found that lines the wall of the exit tunnel in the center of the 70S ribosome. This Dehalococcoides mccartyi (strain ATCC BAA-2266 / KCTC 15142 / 195) (Dehalococcoides ethenogenes (strain 195)) protein is Large ribosomal subunit protein uL22.